Here is a 589-residue protein sequence, read N- to C-terminus: Coiled-coil domain-containing protein 22 homolog (589 aa).

Coiled coils occupy residues 287–426 (KTPL…LQTK) and 523–589 (CEEL…TSRQ). A disordered region spans residues 568–589 (EMQNESQRLEESIRRMEVTSRQ). Over residues 574 to 589 (QRLEESIRRMEVTSRQ) the composition is skewed to basic and acidic residues.

This sequence belongs to the CCDC22 family.

The protein is Coiled-coil domain-containing protein 22 homolog of Aedes aegypti (Yellowfever mosquito).